A 379-amino-acid polypeptide reads, in one-letter code: Lipid-A-disaccharide synthase (379 aa).

The protein belongs to the LpxB family.

The enzyme catalyses a lipid X + a UDP-2-N,3-O-bis[(3R)-3-hydroxyacyl]-alpha-D-glucosamine = a lipid A disaccharide + UDP + H(+). It participates in bacterial outer membrane biogenesis; LPS lipid A biosynthesis. Its function is as follows. Condensation of UDP-2,3-diacylglucosamine and 2,3-diacylglucosamine-1-phosphate to form lipid A disaccharide, a precursor of lipid A, a phosphorylated glycolipid that anchors the lipopolysaccharide to the outer membrane of the cell. This Vibrio cholerae serotype O1 (strain ATCC 39541 / Classical Ogawa 395 / O395) protein is Lipid-A-disaccharide synthase.